A 115-amino-acid polypeptide reads, in one-letter code: Colicin-Ib immunity protein (115 aa).

The next 3 membrane-spanning stretches (helical) occupy residues 7 to 27 (VKYL…FYLG), 38 to 58 (FYAF…MRII), and 87 to 107 (IFEL…LIFI).

It localises to the cell membrane. Its function is as follows. This protein is able to protect a cell, which harbors the plasmid IncI1 ColIb-P9 encoding colicin Ib, against colicin Ib. The chain is Colicin-Ib immunity protein from Escherichia coli.